The chain runs to 205 residues: Thiamine-phosphate synthase (205 aa).

4-amino-2-methyl-5-(diphosphooxymethyl)pyrimidine contacts are provided by residues 37 to 41 (QVREK) and Asn-69. 2 residues coordinate Mg(2+): Asp-70 and Asp-89. A 4-amino-2-methyl-5-(diphosphooxymethyl)pyrimidine-binding site is contributed by Ser-108. A 2-[(2R,5Z)-2-carboxy-4-methylthiazol-5(2H)-ylidene]ethyl phosphate-binding site is contributed by 134-136 (TGS). Lys-137 lines the 4-amino-2-methyl-5-(diphosphooxymethyl)pyrimidine pocket. Residues Gly-165 and 185–186 (IS) contribute to the 2-[(2R,5Z)-2-carboxy-4-methylthiazol-5(2H)-ylidene]ethyl phosphate site.

Belongs to the thiamine-phosphate synthase family. The cofactor is Mg(2+).

The enzyme catalyses 2-[(2R,5Z)-2-carboxy-4-methylthiazol-5(2H)-ylidene]ethyl phosphate + 4-amino-2-methyl-5-(diphosphooxymethyl)pyrimidine + 2 H(+) = thiamine phosphate + CO2 + diphosphate. The catalysed reaction is 2-(2-carboxy-4-methylthiazol-5-yl)ethyl phosphate + 4-amino-2-methyl-5-(diphosphooxymethyl)pyrimidine + 2 H(+) = thiamine phosphate + CO2 + diphosphate. It carries out the reaction 4-methyl-5-(2-phosphooxyethyl)-thiazole + 4-amino-2-methyl-5-(diphosphooxymethyl)pyrimidine + H(+) = thiamine phosphate + diphosphate. It functions in the pathway cofactor biosynthesis; thiamine diphosphate biosynthesis; thiamine phosphate from 4-amino-2-methyl-5-diphosphomethylpyrimidine and 4-methyl-5-(2-phosphoethyl)-thiazole: step 1/1. Condenses 4-methyl-5-(beta-hydroxyethyl)thiazole monophosphate (THZ-P) and 2-methyl-4-amino-5-hydroxymethyl pyrimidine pyrophosphate (HMP-PP) to form thiamine monophosphate (TMP). The sequence is that of Thiamine-phosphate synthase from Clostridium botulinum (strain Kyoto / Type A2).